A 198-amino-acid chain; its full sequence is Nucleoid occlusion factor SlmA (198 aa).

An HTH tetR-type domain is found at 10 to 70 (NRREEILQSL…SLIEFIEDSL (61 aa)). Positions 33–52 (TTAKLAASVGVSEAALYRHF) form a DNA-binding region, H-T-H motif. Residues 117 to 144 (EQDRLQGRINQLFERIEAQLRQVLREKR) are a coiled coil.

It belongs to the nucleoid occlusion factor SlmA family. As to quaternary structure, homodimer. Interacts with FtsZ.

It is found in the cytoplasm. Its subcellular location is the nucleoid. Required for nucleoid occlusion (NO) phenomenon, which prevents Z-ring formation and cell division over the nucleoid. Acts as a DNA-associated cell division inhibitor that binds simultaneously chromosomal DNA and FtsZ, and disrupts the assembly of FtsZ polymers. SlmA-DNA-binding sequences (SBS) are dispersed on non-Ter regions of the chromosome, preventing FtsZ polymerization at these regions. The protein is Nucleoid occlusion factor SlmA of Salmonella typhi.